Here is a 331-residue protein sequence, read N- to C-terminus: DNA-directed RNA polymerase subunit alpha (331 aa).

The interval 1 to 232 (MQGTFRDFLK…DQLSVFVDLE (232 aa)) is alpha N-terminal domain (alpha-NTD). The segment at 247–331 (VDPILLRPID…AGLGEDRVVG (85 aa)) is alpha C-terminal domain (alpha-CTD).

It belongs to the RNA polymerase alpha chain family. In terms of assembly, homodimer. The RNAP catalytic core consists of 2 alpha, 1 beta, 1 beta' and 1 omega subunit. When a sigma factor is associated with the core the holoenzyme is formed, which can initiate transcription.

It carries out the reaction RNA(n) + a ribonucleoside 5'-triphosphate = RNA(n+1) + diphosphate. Its function is as follows. DNA-dependent RNA polymerase catalyzes the transcription of DNA into RNA using the four ribonucleoside triphosphates as substrates. The chain is DNA-directed RNA polymerase subunit alpha from Alkalilimnicola ehrlichii (strain ATCC BAA-1101 / DSM 17681 / MLHE-1).